A 318-amino-acid chain; its full sequence is Homoserine kinase (318 aa).

An ATP-binding site is contributed by 97-107 (PIGSGLGSSAC).

It belongs to the GHMP kinase family. Homoserine kinase subfamily.

It is found in the cytoplasm. The catalysed reaction is L-homoserine + ATP = O-phospho-L-homoserine + ADP + H(+). It participates in amino-acid biosynthesis; L-threonine biosynthesis; L-threonine from L-aspartate: step 4/5. Catalyzes the ATP-dependent phosphorylation of L-homoserine to L-homoserine phosphate. This Aliivibrio fischeri (strain ATCC 700601 / ES114) (Vibrio fischeri) protein is Homoserine kinase.